The sequence spans 220 residues: Iron-sulfur cluster repair protein YtfE (220 aa).

It belongs to the RIC family. YtfE subfamily. Homodimer.

The protein localises to the cytoplasm. Di-iron-containing protein involved in the repair of iron-sulfur clusters damaged by oxidative and nitrosative stress conditions. In Salmonella typhimurium (strain LT2 / SGSC1412 / ATCC 700720), this protein is Iron-sulfur cluster repair protein YtfE.